Consider the following 445-residue polypeptide: MKPVIALVGRPNVGKSTLFNRLTRSRDALVADLPGLTRDRHYGEGRVGARPYLVVDTGGFEPVAKDGILHEMARQTRQAVEEADVVVFIVDGRNGLAPQDKSIADYLRKTGRPIFLVVNKAEGMKYTAVATDFYELGLGDPRAISAAHGDGVTDMINEALEVAYADQPEEEDDNDPSRGIKIAIVGRPNVGKSTLVNALIGEDRVIAFDMPGTTRDSIYVDFERNGKKYTLIDTAGLRRSGKVFEAIEKFSVVKTLQSISDANVVILLLDAQQDISDQDAHIAGFVVEQGRALVIGVNKWDGLDEHARERAKADLTRKLKFLDFAKSHFISAAKKTGIGALMRSVDDAYAAAMAKLPTPKLTRALIEAVEFQQPRRRGPVRPKLRYAHQGGQNPPIIVIHGNALDAVTETYKRYLENRFRETFSLTGTPLRIEFRSSTNPYADKG.

EngA-type G domains follow at residues 3–167 (PVIA…YADQ) and 180–353 (IKIA…AAAM). GTP is bound by residues 9-16 (GRPNVGKS), 56-60 (DTGGF), 119-122 (NKAE), 186-193 (GRPNVGKS), 233-237 (DTAGL), and 298-301 (NKWD). A KH-like domain is found at 354 to 438 (AKLPTPKLTR…PLRIEFRSST (85 aa)).

Belongs to the TRAFAC class TrmE-Era-EngA-EngB-Septin-like GTPase superfamily. EngA (Der) GTPase family. As to quaternary structure, associates with the 50S ribosomal subunit.

Its function is as follows. GTPase that plays an essential role in the late steps of ribosome biogenesis. The sequence is that of GTPase Der from Burkholderia multivorans (strain ATCC 17616 / 249).